The chain runs to 214 residues: Phosphoheptose isomerase (214 aa).

The SIS domain occupies 51-209 (IASTFEDGGK…IDLVERLLGY (159 aa)). 66–68 (NGG) lines the substrate pocket. Residues histidine 75 and glutamate 79 each coordinate Zn(2+). Substrate contacts are provided by residues glutamate 79, 110-111 (ND), 136-138 (STS), serine 141, and glutamine 189. Residues glutamine 189 and histidine 197 each coordinate Zn(2+).

The protein belongs to the SIS family. GmhA subfamily. It depends on Zn(2+) as a cofactor.

Its subcellular location is the cytoplasm. It carries out the reaction 2 D-sedoheptulose 7-phosphate = D-glycero-alpha-D-manno-heptose 7-phosphate + D-glycero-beta-D-manno-heptose 7-phosphate. It functions in the pathway carbohydrate biosynthesis; D-glycero-D-manno-heptose 7-phosphate biosynthesis; D-glycero-alpha-D-manno-heptose 7-phosphate and D-glycero-beta-D-manno-heptose 7-phosphate from sedoheptulose 7-phosphate: step 1/1. In terms of biological role, catalyzes the isomerization of sedoheptulose 7-phosphate in D-glycero-D-manno-heptose 7-phosphate. The polypeptide is Phosphoheptose isomerase (Chlorobium limicola (strain DSM 245 / NBRC 103803 / 6330)).